Consider the following 188-residue polypeptide: dCTP deaminase (188 aa).

Residues 111–116, 135–137, Gln-156, Tyr-170, and Gln-180 each bind dCTP; these read KSTYAR and TLE. Glu-137 serves as the catalytic Proton donor/acceptor.

The protein belongs to the dCTP deaminase family. As to quaternary structure, homotrimer.

The catalysed reaction is dCTP + H2O + H(+) = dUTP + NH4(+). It participates in pyrimidine metabolism; dUMP biosynthesis; dUMP from dCTP (dUTP route): step 1/2. In terms of biological role, catalyzes the deamination of dCTP to dUTP. The protein is dCTP deaminase of Acidovorax sp. (strain JS42).